Here is a 251-residue protein sequence, read N- to C-terminus: Vitamin B12 import ATP-binding protein BtuD (251 aa).

Residues 2-236 (IRVNSLQVDS…EVLQSVFGTS (235 aa)) form the ABC transporter domain. ATP is bound at residue 30–37 (GPNGCGKS).

This sequence belongs to the ABC transporter superfamily. Vitamin B12 importer (TC 3.A.1.13.1) family. In terms of assembly, the complex is composed of two ATP-binding proteins (BtuD), two transmembrane proteins (BtuC) and a solute-binding protein (BtuF).

The protein localises to the cell inner membrane. It carries out the reaction an R-cob(III)alamin(out) + ATP + H2O = an R-cob(III)alamin(in) + ADP + phosphate + H(+). Its function is as follows. Part of the ABC transporter complex BtuCDF involved in vitamin B12 import. Responsible for energy coupling to the transport system. In Vibrio cholerae serotype O1 (strain ATCC 39315 / El Tor Inaba N16961), this protein is Vitamin B12 import ATP-binding protein BtuD.